The primary structure comprises 581 residues: Kelch-like protein 38 (581 aa).

The region spanning 34-101 (TDVSICAGAR…VYTGEAHIAT (68 aa)) is the BTB domain. A BACK domain is found at 136–237 (CLGMIRLSEI…HPAFFHHFIA (102 aa)). 6 Kelch repeats span residues 285-332 (FLIL…TLHR), 334-383 (IYVL…AHKN), 384-431 (FIFS…VKDQ), 433-479 (LYLF…VLGE), 480-521 (RIVI…VMGN), and 523-573 (LYVT…TLQC).

The chain is Kelch-like protein 38 (KLHL38) from Homo sapiens (Human).